We begin with the raw amino-acid sequence, 100 residues long: Small ribosomal subunit protein bS18c (100 aa).

This sequence belongs to the bacterial ribosomal protein bS18 family. In terms of assembly, part of the 30S ribosomal subunit.

It is found in the plastid. The protein localises to the chloroplast. This Pleurastrum terricola (Filamentous green alga) protein is Small ribosomal subunit protein bS18c.